The primary structure comprises 203 residues: Holliday junction branch migration complex subunit RuvA (203 aa).

The tract at residues 1-64 is domain I; that stretch reads MIGRLRGIIL…EDAQLLYGFN (64 aa). A domain II region spans residues 65–142; it reads NKQERTLFKE…KGLHGDLFTP (78 aa). Residues 143–154 form a flexible linker region; that stretch reads AVDLVLTSPASP. The domain III stretch occupies residues 155–203; it reads TSEDAEQEAVAALVALGYKPQEASRMVNKIARPDASSETLIRDALRAAL.

This sequence belongs to the RuvA family. As to quaternary structure, homotetramer. Forms an RuvA(8)-RuvB(12)-Holliday junction (HJ) complex. HJ DNA is sandwiched between 2 RuvA tetramers; dsDNA enters through RuvA and exits via RuvB. An RuvB hexamer assembles on each DNA strand where it exits the tetramer. Each RuvB hexamer is contacted by two RuvA subunits (via domain III) on 2 adjacent RuvB subunits; this complex drives branch migration. In the full resolvosome a probable DNA-RuvA(4)-RuvB(12)-RuvC(2) complex forms which resolves the HJ.

The protein localises to the cytoplasm. The RuvA-RuvB-RuvC complex processes Holliday junction (HJ) DNA during genetic recombination and DNA repair, while the RuvA-RuvB complex plays an important role in the rescue of blocked DNA replication forks via replication fork reversal (RFR). RuvA specifically binds to HJ cruciform DNA, conferring on it an open structure. The RuvB hexamer acts as an ATP-dependent pump, pulling dsDNA into and through the RuvAB complex. HJ branch migration allows RuvC to scan DNA until it finds its consensus sequence, where it cleaves and resolves the cruciform DNA. This chain is Holliday junction branch migration complex subunit RuvA, found in Salmonella choleraesuis (strain SC-B67).